Consider the following 190-residue polypeptide: Ribonuclease HII (190 aa).

An RNase H type-2 domain is found at 1–190; sequence MAGVDEVGRG…FCRKIIENPD (190 aa). 3 residues coordinate a divalent metal cation: Asp-5, Glu-6, and Asp-101.

It belongs to the RNase HII family. It depends on Mn(2+) as a cofactor. The cofactor is Mg(2+).

It is found in the cytoplasm. It catalyses the reaction Endonucleolytic cleavage to 5'-phosphomonoester.. In terms of biological role, endonuclease that specifically degrades the RNA of RNA-DNA hybrids. This is Ribonuclease HII (rnhB) from Synechocystis sp. (strain ATCC 27184 / PCC 6803 / Kazusa).